Consider the following 191-residue polypeptide: Inosine triphosphate pyrophosphatase (191 aa).

Threonine 12–lysine 17 is a binding site for ITP. Glutamate 42 lines the Mg(2+) pocket. Residues lysine 54, aspartate 70–threonine 71, lysine 87, phenylalanine 145–aspartate 148, lysine 168, and histidine 173–arginine 174 contribute to the ITP site.

It belongs to the HAM1 NTPase family. In terms of assembly, homodimer. The cofactor is Mg(2+). It depends on Mn(2+) as a cofactor.

The protein resides in the cytoplasm. It carries out the reaction ITP + H2O = IMP + diphosphate + H(+). The catalysed reaction is dITP + H2O = dIMP + diphosphate + H(+). It catalyses the reaction XTP + H2O = XMP + diphosphate + H(+). Pyrophosphatase that hydrolyzes non-canonical purine nucleotides such as inosine triphosphate (ITP), deoxyinosine triphosphate (dITP) or xanthosine 5'-triphosphate (XTP) to their respective monophosphate derivatives. The enzyme does not distinguish between the deoxy- and ribose forms. Probably excludes non-canonical purines from RNA and DNA precursor pools, thus preventing their incorporation into RNA and DNA and avoiding chromosomal lesions. The polypeptide is Inosine triphosphate pyrophosphatase (Phytophthora infestans (strain T30-4) (Potato late blight agent)).